Here is a 287-residue protein sequence, read N- to C-terminus: MGSLKDIDSRIKSTKKMNQITKAMNMVASSKLNKAQRNSNQFKPYMDKLQNAITAVAGQTTSNHPMLVERPVKKRGYLVISSDRGLAGAYNANILRKVLQDIQERGENPSDYKLLVLGKVGIDFFKNRSIEVEYALPDVPDQPTFKSIEPVTKKAIDLYENGDIDELNIYYNKFINVLESKPTAKRVLPLSKEDASSGLGQMSSYEFEPDKESILNIILPQYVEGLIYGTILNAKASEHAMRMTAMKNASDNASDLIDDLSLQYNRARQAAITQQITEIVGGATALE.

Belongs to the ATPase gamma chain family. In terms of assembly, F-type ATPases have 2 components, CF(1) - the catalytic core - and CF(0) - the membrane proton channel. CF(1) has five subunits: alpha(3), beta(3), gamma(1), delta(1), epsilon(1). CF(0) has three main subunits: a, b and c.

The protein localises to the cell membrane. Functionally, produces ATP from ADP in the presence of a proton gradient across the membrane. The gamma chain is believed to be important in regulating ATPase activity and the flow of protons through the CF(0) complex. The chain is ATP synthase gamma chain from Staphylococcus carnosus (strain TM300).